The primary structure comprises 177 residues: Mitochondrial inner membrane protease subunit 2 (177 aa).

Catalysis depends on residues serine 41 and lysine 91. A helical transmembrane segment spans residues threonine 134–tryptophan 152.

Belongs to the peptidase S26 family. IMP2 subfamily. Component of the mitochondrial inner membrane peptidase (IMP) complex which at least consists of IMP1, IMP2 and SOM1. In terms of processing, the N-terminus is blocked.

The protein resides in the mitochondrion inner membrane. Its function is as follows. Catalytic component of the mitochondrial inner membrane peptidase (IMP) complex. IMP catalyzes the removal of signal peptides required for the targeting of proteins from the mitochondrial matrix, across the inner membrane, into the inter-membrane space. The two catalytic IMP subunits seem to have non-overlapping substrate specificities. IMP2 substrates include nuclear encoded CYB2, mitochondrially encoded COX2 and cytochrome c1. Required for the stability of IMP1. This Saccharomyces cerevisiae (strain ATCC 204508 / S288c) (Baker's yeast) protein is Mitochondrial inner membrane protease subunit 2 (IMP2).